Consider the following 564-residue polypeptide: Carbamoyl phosphate synthase large chain, N-terminal section (564 aa).

The segment at 1–399 (MPETPNKVLI…ALQKAIRSLE (399 aa)) is carboxyphosphate synthetic domain. Residues R127, R167, G173, G174, E206, V208, E213, G239, V240, H241, Q282, and E296 each contribute to the ATP site. The 195-residue stretch at 131-325 (RAFMKKIGEP…IARIAAKIAI (195 aa)) folds into the ATP-grasp domain. Mg(2+) is bound by residues Q282, E296, and N298. Residues Q282, E296, and N298 each coordinate Mn(2+). The segment at 400-560 (IGEPGLGPSP…YSTYEEECEA (161 aa)) is oligomerization domain.

It belongs to the CarB family. In terms of assembly, composed of two chains; the small (or glutamine) chain promotes the hydrolysis of glutamine to ammonia, which is used by the large (or ammonia) chain to synthesize carbamoyl phosphate. Tetramer of heterodimers (alpha,beta)4. Requires Mg(2+) as cofactor. The cofactor is Mn(2+).

The catalysed reaction is hydrogencarbonate + L-glutamine + 2 ATP + H2O = carbamoyl phosphate + L-glutamate + 2 ADP + phosphate + 2 H(+). It carries out the reaction hydrogencarbonate + NH4(+) + 2 ATP = carbamoyl phosphate + 2 ADP + phosphate + 2 H(+). Its pathway is amino-acid biosynthesis; L-arginine biosynthesis; carbamoyl phosphate from bicarbonate: step 1/1. It participates in pyrimidine metabolism; UMP biosynthesis via de novo pathway; (S)-dihydroorotate from bicarbonate: step 1/3. Large subunit of the glutamine-dependent carbamoyl phosphate synthetase (CPSase). CPSase catalyzes the formation of carbamoyl phosphate from the ammonia moiety of glutamine, carbonate, and phosphate donated by ATP, constituting the first step of 2 biosynthetic pathways, one leading to arginine and/or urea and the other to pyrimidine nucleotides. The large subunit (synthetase) binds the substrates ammonia (free or transferred from glutamine from the small subunit), hydrogencarbonate and ATP and carries out an ATP-coupled ligase reaction, activating hydrogencarbonate by forming carboxy phosphate which reacts with ammonia to form carbamoyl phosphate. The protein is Carbamoyl phosphate synthase large chain, N-terminal section (carB1) of Methanopyrus kandleri (strain AV19 / DSM 6324 / JCM 9639 / NBRC 100938).